A 294-amino-acid chain; its full sequence is MNGILSTTEVDSQAELSCPAPAKLNLFLHVVGRREDGYHLLQTVFRLVDFADQLHFGLRADGVIKLHTPTPGVPEEQDLCVRAAKLLQRESGTPWGANIFLEKRIPMGGGLGGGSSDAATTLLALNRLWKLGWRRNQLLKLAPELGADVPVFVFSENAFAEGIGEKLLPIALPPAWYLILTPPVHVSTAKVFSSKELTRNTIPIKIPPFSTEQGHNDLEPVVCASYPEVARHLEWLRQLEGARMAAMTGSGACVFAEFATESGARSALGKIPYGMKGFVAQGLDRHPLHDFAEQ.

Residue Lys-23 is part of the active site. Residue Pro-106–Ser-116 coordinates ATP. Residue Asp-148 is part of the active site.

The protein belongs to the GHMP kinase family. IspE subfamily.

It carries out the reaction 4-CDP-2-C-methyl-D-erythritol + ATP = 4-CDP-2-C-methyl-D-erythritol 2-phosphate + ADP + H(+). It functions in the pathway isoprenoid biosynthesis; isopentenyl diphosphate biosynthesis via DXP pathway; isopentenyl diphosphate from 1-deoxy-D-xylulose 5-phosphate: step 3/6. In terms of biological role, catalyzes the phosphorylation of the position 2 hydroxy group of 4-diphosphocytidyl-2C-methyl-D-erythritol. The polypeptide is 4-diphosphocytidyl-2-C-methyl-D-erythritol kinase (Nitrosospira multiformis (strain ATCC 25196 / NCIMB 11849 / C 71)).